Consider the following 117-residue polypeptide: Eukaryotic translation initiation factor 4E-binding protein (117 aa).

Residues Thr-37 and Thr-46 each carry the phosphothreonine modification. A YXXXXLphi motif; atypical motif is present at residues 54–60 (YERAFMK). The residue at position 65 (Ser-65) is a Phosphoserine. Position 70 is a phosphothreonine (Thr-70).

It belongs to the eIF4E-binding protein family. Hypophosphorylated Thor/4E-BP competes with eIF4G1 to interact with eIF4E1; insulin stimulated Akt1 or Tor phosphorylation of Thor/4E-BP causes dissociation of the complex allowing eIF4G1 to bind and consequent initiation of translation. In terms of processing, phosphorylation at Thr-37, Thr-46, Ser-65 and Thr-70, corresponding to the hyperphosphorylated form, impairs its ability to prevent the interaction between eIF4G1 and eIF4E1, without affecting its interaction with free eIF4E1. Phosphorylated in rtesponse to insulin. Phosphorylation at Thr-46 is regulated by Tor and constitutes the major phosphorylation event that regulates activity. Widely expressed.

Functionally, repressor of translation initiation that regulates eIF4E1 activity by preventing its assembly into the eIF4F complex. Hypophosphorylated form competes with eIF4G1 and strongly binds to eIF4E1, leading to repress translation. In contrast, hyperphosphorylated form dissociates from eIF4E1, allowing interaction between eIF4G1 and eIF4E1, leading to initiation of translation. Acts as a regulator of various biological processes, such as innate immunity, cell growth or synaptic transmission. Acts downstream of phosphoinositide-3-kinase (PI3K) to regulate cell growth. Extends lifespan upon dietary restriction by regulating the mitochondrial translation. Acts as a regulator of lifespan in response to cold by regulating the mitochondrial translation. Acts as a negative regulator of presynaptic release of neurotransmitter in motor neurons: Thor expression is induced in response to insulin signaling, leading to prevent of translation of complexin (cpx), a protein known to regulate the exocytosis of synaptic vesicles. Acts as a negative regulator of synaptic strength at the neuromuscular junction: Thor expression in response to acute fasting prevents translation, thereby suppressing retrograde synaptic enhancement. The sequence is that of Eukaryotic translation initiation factor 4E-binding protein from Drosophila melanogaster (Fruit fly).